Reading from the N-terminus, the 300-residue chain is Cytochrome b (300 aa).

6 consecutive transmembrane segments (helical) span residues 28–48 (YGFL…LLAL), 72–94 (WCFR…LHIL), 107–127 (SWIS…YGYV), 168–187 (FFVF…FGIL), 223–243 (IPNK…LFLL), and 279–299 (IGCQ…YIIL). Heme b is bound by residues His-78 and His-92.

The protein belongs to the cytochrome b family. The main subunits of complex b-c1 are: cytochrome b, cytochrome c1 and the Rieske protein. Heme b is required as a cofactor.

The protein localises to the mitochondrion inner membrane. In terms of biological role, component of the ubiquinol-cytochrome c reductase complex (complex III or cytochrome b-c1 complex) that is part of the mitochondrial respiratory chain. The b-c1 complex mediates electron transfer from ubiquinol to cytochrome c. Contributes to the generation of a proton gradient across the mitochondrial membrane that is then used for ATP synthesis. The protein is Cytochrome b (MT-CYB) of Plasmodium gallinaceum.